Reading from the N-terminus, the 281-residue chain is General control transcription factor GCN4 (281 aa).

Position 17 is a phosphoserine (serine 17). 2 required for transcriptional activation regions span residues 89–100 (LDDAVVESFFSS) and 106–125 (PMFE…SLFD). Residue threonine 165 is modified to Phosphothreonine; by PHO85. The Nuclear localization signal signature appears at 167-200 (VLEDAKLTQTRKVKKPNSVVKKSHHVGKDDESRL). The disordered stretch occupies residues 217–248 (LSPIVPESSDPAALKRARNTEAARRSRARKLQ). At serine 218 the chain carries Phosphoserine. The bZIP domain occupies 225–281 (SDPAALKRARNTEAARRSRARKLQRMKQLEDKVEELLSKNYHLENEVARLKKLVGER). The Nuclear localization signal motif lies at 231–249 (KRARNTEAARRSRARKLQR). The interval 231-251 (KRARNTEAARRSRARKLQRMK) is basic motif. The interval 253 to 274 (LEDKVEELLSKNYHLENEVARL) is leucine-zipper.

Belongs to the bZIP family. GCN4 subfamily. In terms of assembly, homodimer. Each subunit binds overlapping and non-identical half-sites that flank the central CG base-pair in the pseudo-palindromic motif 5'-ATGA[CG]TCAT-3'. Interacts with the mediator tail; the interaction with GAL11/MED15 is direct. Interacts with the SAGA histone acetyltransferase complex. Interacts with the SWI/SNF chromatin remodeling complex. Phosphorylated by the cyclin-CDK PCL5-PHO85. Phosphorylation of Thr-165 induces degradation of GCN4 by the E3 ubiquitin ligase complex SCF(Cdc4).

The protein resides in the nucleus. In terms of biological role, master transcriptional regulator that mediates the response to amino acid starvation. Binds variations of the DNA sequence 5'-ATGA[CG]TCAT-3' in canonical nucleosome-depleted 5'-positioned promoters, and also within coding sequences and 3' non-coding regions. During nutrient starvation (low or poor amino acid, carbon or purine sources), it activates genes required for amino acid biosynthesis and transport, autophagy, cofactor biosynthesis and transport, mitochondrial transport, and additional downstream transcription factors. Activates transcription by recruiting multiple coactivators, including the mediator complex, the SAGA complex, and the SWI/SNF complex, to enable assembly of the pre-initiation complex at core promoters. This chain is General control transcription factor GCN4, found in Saccharomyces cerevisiae (strain ATCC 204508 / S288c) (Baker's yeast).